Reading from the N-terminus, the 360-residue chain is Photosystem II protein D1 (360 aa).

The next 3 helical transmembrane spans lie at 29-46 (YIGW…TATT), 118-133 (HFLL…EWEL), and 142-156 (WIFV…AASA). His-118 is a binding site for chlorophyll a. Tyr-126 contributes to the pheophytin a binding site. [CaMn4O5] cluster is bound by residues Asp-170 and Glu-189. Residues 197–218 (FHMAGVAGVFGGSLFSAMHGSL) form a helical membrane-spanning segment. His-198 contributes to the chlorophyll a binding site. A quinone is bound by residues His-215 and 264-265 (SF). His-215 contributes to the Fe cation binding site. His-272 contributes to the Fe cation binding site. Residues 274 to 288 (FLAAWPVVRIWLTAL) form a helical membrane-spanning segment. The [CaMn4O5] cluster site is built by His-332, Glu-333, Asp-342, and Ala-344. Positions 345 to 360 (AGEVLPVAVSAPAVHA) are excised as a propeptide.

The protein belongs to the reaction center PufL/M/PsbA/D family. In terms of assembly, PSII is composed of 1 copy each of membrane proteins PsbA, PsbB, PsbC, PsbD, PsbE, PsbF, PsbH, PsbI, PsbJ, PsbK, PsbL, PsbM, PsbT, PsbX, PsbY, PsbZ, Psb30/Ycf12, at least 3 peripheral proteins of the oxygen-evolving complex and a large number of cofactors. It forms dimeric complexes. It depends on The D1/D2 heterodimer binds P680, chlorophylls that are the primary electron donor of PSII, and subsequent electron acceptors. It shares a non-heme iron and each subunit binds pheophytin, quinone, additional chlorophylls, carotenoids and lipids. D1 provides most of the ligands for the Mn4-Ca-O5 cluster of the oxygen-evolving complex (OEC). There is also a Cl(-1) ion associated with D1 and D2, which is required for oxygen evolution. The PSII complex binds additional chlorophylls, carotenoids and specific lipids. as a cofactor. Post-translationally, tyr-161 forms a radical intermediate that is referred to as redox-active TyrZ, YZ or Y-Z. In terms of processing, C-terminally processed by CTPA; processing is essential to allow assembly of the oxygen-evolving complex and thus photosynthetic growth.

It localises to the plastid. Its subcellular location is the chloroplast thylakoid membrane. The enzyme catalyses 2 a plastoquinone + 4 hnu + 2 H2O = 2 a plastoquinol + O2. Its function is as follows. Photosystem II (PSII) is a light-driven water:plastoquinone oxidoreductase that uses light energy to abstract electrons from H(2)O, generating O(2) and a proton gradient subsequently used for ATP formation. It consists of a core antenna complex that captures photons, and an electron transfer chain that converts photonic excitation into a charge separation. The D1/D2 (PsbA/PsbD) reaction center heterodimer binds P680, the primary electron donor of PSII as well as several subsequent electron acceptors. In Bumilleriopsis filiformis (Yellow-green alga), this protein is Photosystem II protein D1.